Here is a 149-residue protein sequence, read N- to C-terminus: UPF0336 protein Lxx02810 (149 aa).

This sequence belongs to the UPF0336 family.

This chain is UPF0336 protein Lxx02810, found in Leifsonia xyli subsp. xyli (strain CTCB07).